The primary structure comprises 106 residues: uncharacterized protein (106 aa).

This is an uncharacterized protein from Thermoproteus tenax virus 1 (strain KRA1) (TTV1).